Reading from the N-terminus, the 218-residue chain is Glutathione S-transferase Mu 4 (218 aa).

Residues 2–88 (SMTLGYWDIR…YIARKHNLCG (87 aa)) enclose the GST N-terminal domain. Residues 7-8 (YW), 46-50 (WLNEK), 59-60 (NL), and 72-73 (QS) contribute to the glutathione site. The GST C-terminal domain occupies 90–208 (TEEEKIRVDI…KSSRFLPKPL (119 aa)). Y116 lines the substrate pocket.

This sequence belongs to the GST superfamily. Mu family. Homodimer. As to expression, expressed in a wide variety of tissues.

It is found in the cytoplasm. It catalyses the reaction RX + glutathione = an S-substituted glutathione + a halide anion + H(+). The catalysed reaction is 1-chloro-2,4-dinitrobenzene + glutathione = 2,4-dinitrophenyl-S-glutathione + chloride + H(+). The enzyme catalyses (13S,14S)-epoxy-(4Z,7Z,9E,11E,16Z,19Z)-docosahexaenoate + glutathione = (13R)-S-glutathionyl-(14S)-hydroxy-(4Z,7Z,9E,11E,16Z,19Z)-docosahexaenoate. It carries out the reaction leukotriene C4 = leukotriene A4 + glutathione. Functionally, conjugation of reduced glutathione to a wide number of exogenous and endogenous hydrophobic electrophiles. Catalyzes the conjugation of leukotriene A4 with reduced glutathione (GSH) to form leukotriene C4. Can also catalyze the transfer of a glutathionyl group from glutathione (GSH) to 13(S),14(S)-epoxy-docosahexaenoic acid to form maresin conjugate in tissue regeneration 1 (MCTR1), a bioactive lipid mediator that possess potent anti-inflammatory and proresolving actions. In Homo sapiens (Human), this protein is Glutathione S-transferase Mu 4 (GSTM4).